A 462-amino-acid polypeptide reads, in one-letter code: Cysteine--tRNA ligase (462 aa).

Cys-24 lines the Zn(2+) pocket. Positions 26–36 (PTVYDDAHLGH) match the 'HIGH' region motif. 3 residues coordinate Zn(2+): Cys-199, His-224, and Glu-228. Residues 256–260 (KMSKS) carry the 'KMSKS' region motif. Lys-259 contacts ATP.

It belongs to the class-I aminoacyl-tRNA synthetase family. Monomer. Zn(2+) serves as cofactor.

It is found in the cytoplasm. It catalyses the reaction tRNA(Cys) + L-cysteine + ATP = L-cysteinyl-tRNA(Cys) + AMP + diphosphate. The protein is Cysteine--tRNA ligase of Campylobacter jejuni subsp. jejuni serotype O:6 (strain 81116 / NCTC 11828).